The sequence spans 398 residues: Spermatogenesis associated 6-like protein (398 aa).

The interval 170–215 (KLNGPANNRKKKPKEKNSDQLSKGTPFWGPSPQRLHLHRPTQRNPG) is disordered. Phosphoserine is present on residues S269 and S272.

The protein belongs to the SPATA6 family.

The protein is Spermatogenesis associated 6-like protein (Spata6l) of Rattus norvegicus (Rat).